The primary structure comprises 642 residues: Threonine--tRNA ligase (642 aa).

A TGS domain is found at 1–61 (MPVIRFYDGS…REDAFIEFVD (61 aa)). Residues 243-534 (DHRKIGKFLQ…LIEECSGNLP (292 aa)) form a catalytic region. 3 residues coordinate Zn(2+): C334, H385, and H511.

The protein belongs to the class-II aminoacyl-tRNA synthetase family. Homodimer. The cofactor is Zn(2+).

Its subcellular location is the cytoplasm. It carries out the reaction tRNA(Thr) + L-threonine + ATP = L-threonyl-tRNA(Thr) + AMP + diphosphate + H(+). In terms of biological role, catalyzes the attachment of threonine to tRNA(Thr) in a two-step reaction: L-threonine is first activated by ATP to form Thr-AMP and then transferred to the acceptor end of tRNA(Thr). Also edits incorrectly charged L-seryl-tRNA(Thr). The chain is Threonine--tRNA ligase from Buchnera aphidicola subsp. Acyrthosiphon pisum (strain Tuc7).